The sequence spans 791 residues: Biofilm architecture maintenance protein MbaA (791 aa).

An N-terminal signal peptide occupies residues 1–23; the sequence is MKLNHRILLLIAPVILLSAAASS. The Periplasmic portion of the chain corresponds to 24–259; that stretch reads YIIYTSQKNA…NAQLHSIQRE (236 aa). A helical transmembrane segment spans residues 260-280; it reads LLLSFGVSALVTVLMLLLLLY. The HAMP domain maps to 281 to 333; it reads RHVINPILHLDKQLEEVENNQRKNIEKLNTDDEIGRLSSRFYAMYSELHSTYQ. The Cytoplasmic segment spans residues 281–791; that stretch reads RHVINPILHL…FTEPSQSECR (511 aa). A GGDEF domain is found at 368-509; that stretch reads QHIWVMYIDL…GKNQVAYYSQ (142 aa). Positions 518–769 constitute an EAL domain; the sequence is RNNIERALRL…EISPWLHASN (252 aa).

The protein localises to the cell inner membrane. Plays an essential role in the maintenance and the formation of the three-dimensional structure of the biofilms at the later stages of their development. Absence of mbaA promotes the accumulation of larger amount of biomass on the surfaces at later stage of development, results in the overproduction of an extracellular polymeric substance that accumulates in the matrix of biofilms. This yields biofilms lacking the typical structure consisting of pillars of cells separated by fluid filled channels. The protein is Biofilm architecture maintenance protein MbaA (mbaA) of Vibrio cholerae serotype O1 (strain ATCC 39315 / El Tor Inaba N16961).